We begin with the raw amino-acid sequence, 75 residues long: Conotoxin VnMKLT2-012 (75 aa).

Residues 1-23 (MMKLTCVLIIAVLFLTACQLTTA) form the signal peptide. Positions 24–45 (ETRDEYRAVRSSDEVRNSRSTR) are excised as a propeptide. Over residues 31–45 (AVRSSDEVRNSRSTR) the composition is skewed to basic and acidic residues. Residues 31-50 (AVRSSDEVRNSRSTRDCSGS) form a disordered region. Intrachain disulfides connect cysteine 47–cysteine 60, cysteine 54–cysteine 65, and cysteine 59–cysteine 74.

This sequence belongs to the conotoxin O1 superfamily. As to expression, expressed by the venom duct.

It localises to the secreted. The sequence is that of Conotoxin VnMKLT2-012 from Conus ventricosus (Mediterranean cone).